The following is a 78-amino-acid chain: UPF0369 protein RF_1112 (78 aa).

It belongs to the SDHAF4 family.

The sequence is that of UPF0369 protein RF_1112 from Rickettsia felis (strain ATCC VR-1525 / URRWXCal2) (Rickettsia azadi).